The primary structure comprises 62 residues: Large ribosomal subunit protein bL32 (62 aa).

Belongs to the bacterial ribosomal protein bL32 family.

This chain is Large ribosomal subunit protein bL32, found in Levilactobacillus brevis (strain ATCC 367 / BCRC 12310 / CIP 105137 / JCM 1170 / LMG 11437 / NCIMB 947 / NCTC 947) (Lactobacillus brevis).